Reading from the N-terminus, the 374-residue chain is MKMNDLIHIRRAFHQIPELGFNEFKTQKLLLDTISNMEQTRLQIKTWKTAVFVRVEGRQDYTIAYRADMDGLPITEETGYSFASKHEGAMHACGHDFHMTIALGLLDHFASHEPECHLLFIFQPAEEGPGGAKPIIEADVLGAWQPDEIYALHIDPNLPVGSIATKPGLLFANTSELFIDFQGKGGHAAYPHTANDMVVACAHFVTQVQTVVARNIDPLDSAVVTLGVIAGGTKQNVIAATARLEGTIRTLSMASMEVVKSRLEAIAAGIEASFACKIAIDYGSNYCEVYNDPELAEAFAAFSKTRKGITFVEAEEAMTGEDFGYFLKQYPGVMFWLGVDSPYGLHDSRLQPSEEAIGIAIEHMVAFLSAKKPR.

The active site involves Asp68. Residue Glu127 is the Proton acceptor of the active site.

The protein belongs to the peptidase M20A family. N-acetyldiaminopimelate deacetylase subfamily.

The enzyme catalyses N-acetyl-(2S,6S)-2,6-diaminopimelate + H2O = (2S,6S)-2,6-diaminopimelate + acetate. The protein operates within amino-acid biosynthesis; L-lysine biosynthesis via DAP pathway; LL-2,6-diaminopimelate from (S)-tetrahydrodipicolinate (acetylase route): step 3/3. In terms of biological role, catalyzes the conversion of N-acetyl-diaminopimelate to diaminopimelate and acetate. The polypeptide is N-acetyldiaminopimelate deacetylase (Shouchella clausii (strain KSM-K16) (Alkalihalobacillus clausii)).